The following is a 239-amino-acid chain: Protein NtpR (239 aa).

In terms of domain architecture, Glutamine amidotransferase type-1 spans 12 to 239 (LIRATDTFQG…GLFDFFVQEF (228 aa)). C113 acts as the Nucleophile in catalysis. Residues H217 and E219 contribute to the active site.

This chain is Protein NtpR (ntpR), found in Enterococcus hirae (strain ATCC 9790 / DSM 20160 / JCM 8729 / LMG 6399 / NBRC 3181 / NCIMB 6459 / NCDO 1258 / NCTC 12367 / WDCM 00089 / R).